Reading from the N-terminus, the 1065-residue chain is Leucine-rich repeats and immunoglobulin-like domains protein 2 (1065 aa).

The N-terminal stretch at 1-40 (MAPAPLGVPEEQLLGCRSRVLSRLLFIAQTALLLLPAAGA) is a signal peptide. In terms of domain architecture, LRRNT spans 41–75 (GLCPAPCSCRIPLLDCSRRKLPAPSWRALSGLLPP). Over 41 to 807 (GLCPAPCSCR…HEDDGWTTVG (767 aa)) the chain is Extracellular. LRR repeat units follow at residues 76–97 (DTAI…LESQ), 98–119 (TLQE…GEPT), 121–142 (NITL…ALQF), 145–166 (ALES…SFPR), 168–189 (QLKY…CFDN), 193–214 (SLLV…IFKL), 216–237 (HLQF…TFQG), 240–261 (SLRS…AFFG), 264–285 (NMEE…WLYG), 288–309 (MLQQ…AWEF), 312–333 (RLSE…AFVG), 336–357 (LLER…VFRF), 360–382 (NLQT…SEAF), 387–408 (SLTK…AFIG), and 411–432 (SLEH…AFSQ). A glycan (N-linked (GlcNAc...) asparagine) is linked at Asn-91. An N-linked (GlcNAc...) asparagine glycan is attached at Asn-121. 2 N-linked (GlcNAc...) asparagine glycosylation sites follow: Asn-173 and Asn-189. Asn-274 carries N-linked (GlcNAc...) asparagine glycosylation. N-linked (GlcNAc...) asparagine glycosylation is found at Asn-441, Asn-468, Asn-514, Asn-571, and Asn-589. Positions 443–494 (SSLLCDCHLKWLLQWLVDNNFQHSVNVSCAHPEWLAGQSILNVDLKDFVCDD) constitute an LRRCT domain. 3 Ig-like C2-type domains span residues 498–597 (PQIR…AKLT), 602–691 (PSFL…ASLT), and 696–785 (PSFI…NVIS). Cysteines 519 and 580 form a disulfide. An intrachain disulfide couples Cys-623 to Cys-675. Residues Asn-687 and Asn-728 are each glycosylated (N-linked (GlcNAc...) asparagine). Cys-717 and Cys-766 are oxidised to a cystine. A helical transmembrane segment spans residues 808–828 (IVIIVVVCCVVGTSLIWVIVI). Residues 829–1065 (YHMRRKNEDY…RNIQDGSEGT (237 aa)) lie on the Cytoplasmic side of the membrane. Tyr-906 carries the post-translational modification Phosphotyrosine. Disordered stretches follow at residues 963–990 (SANR…QMSG) and 1003–1040 (ELGL…ASSM). Residues 974–983 (NHERISEKKL) show a composition bias toward basic and acidic residues. The segment covering 1013–1024 (QQPVHESPQLHQ) has biased composition (polar residues).

In terms of tissue distribution, detected in all tissues analyzed.

The protein resides in the cell membrane. It is found in the cytoplasm. The sequence is that of Leucine-rich repeats and immunoglobulin-like domains protein 2 (LRIG2) from Homo sapiens (Human).